The chain runs to 332 residues: tRNA-dihydrouridine synthase B (332 aa).

FMN contacts are provided by residues 16-18 (PMA) and glutamine 70. Cysteine 100 functions as the Proton donor in the catalytic mechanism. FMN is bound by residues lysine 139, 200 to 202 (NGD), and 224 to 225 (GR).

It belongs to the Dus family. DusB subfamily. FMN is required as a cofactor.

It carries out the reaction a 5,6-dihydrouridine in tRNA + NAD(+) = a uridine in tRNA + NADH + H(+). The catalysed reaction is a 5,6-dihydrouridine in tRNA + NADP(+) = a uridine in tRNA + NADPH + H(+). In terms of biological role, catalyzes the synthesis of 5,6-dihydrouridine (D), a modified base found in the D-loop of most tRNAs, via the reduction of the C5-C6 double bond in target uridines. This chain is tRNA-dihydrouridine synthase B, found in Xanthomonas campestris pv. campestris (strain ATCC 33913 / DSM 3586 / NCPPB 528 / LMG 568 / P 25).